Consider the following 524-residue polypeptide: B3 domain-containing protein Os07g0183700 (524 aa).

2 disordered regions span residues 94 to 152 and 191 to 232; these read DGEG…TSVS and PLQP…FQTQ. Residues 100–109 show a composition bias toward pro residues; it reads CAPPPSPIPA. Low complexity-rich tracts occupy residues 110–124 and 200–232; these read GPAS…SAPA and AAAA…FQTQ. The segment at residues 336-434 is a DNA-binding region (TF-B3); the sequence is SFVKPLTYTD…EMFMAVRRTR (99 aa).

The protein resides in the nucleus. This chain is B3 domain-containing protein Os07g0183700, found in Oryza sativa subsp. japonica (Rice).